We begin with the raw amino-acid sequence, 254 residues long: Phosphoglycerate mutase 1 (254 aa).

Substrate is bound by residues 10-17 and 23-24; these read RHGESAWN and SG. The active-site Tele-phosphohistidine intermediate is H11. S14 and S23 each carry phosphoserine. A Phosphotyrosine modification is found at Y26. A Phosphoserine modification is found at S31. Substrate-binding positions include R62, 89–92, and K100; that span reads ERHY. E89 (proton donor/acceptor) is an active-site residue. N6-acetyllysine is present on K106. 116–117 serves as a coordination point for substrate; that stretch reads RR. S118 is modified (phosphoserine). Substrate is bound at residue 187–188; sequence GN. Residue K251 is modified to N6-acetyllysine; alternate. K251 bears the N6-succinyllysine; alternate mark. An N6-acetyllysine mark is found at K253 and K254.

Belongs to the phosphoglycerate mutase family. BPG-dependent PGAM subfamily. As to quaternary structure, homodimer. In terms of processing, acetylated at Lys-253, Lys-253 and Lys-254 under high glucose condition. Acetylation increases catalytic activity. Under glucose restriction SIRT1 levels dramatically increase and it deacetylates the enzyme. In terms of tissue distribution, expressed in the liver and brain. Not found in the muscle.

The catalysed reaction is (2R)-2-phosphoglycerate = (2R)-3-phosphoglycerate. The enzyme catalyses (2R)-3-phospho-glyceroyl phosphate = (2R)-2,3-bisphosphoglycerate + H(+). Its function is as follows. Catalyzes the interconversion of 2-phosphoglycerate and 3-phosphoglyceratea crucial step in glycolysis, by using 2,3-bisphosphoglycerate. Also catalyzes the interconversion of (2R)-2,3-bisphosphoglycerate and (2R)-3-phospho-glyceroyl phosphate. This Homo sapiens (Human) protein is Phosphoglycerate mutase 1.